The primary structure comprises 443 residues: ATP-dependent protease ATPase subunit HslU (443 aa).

ATP contacts are provided by residues I18, 60-65 (GVGKTE), D256, E321, and R393.

Belongs to the ClpX chaperone family. HslU subfamily. In terms of assembly, a double ring-shaped homohexamer of HslV is capped on each side by a ring-shaped HslU homohexamer. The assembly of the HslU/HslV complex is dependent on binding of ATP.

The protein resides in the cytoplasm. ATPase subunit of a proteasome-like degradation complex; this subunit has chaperone activity. The binding of ATP and its subsequent hydrolysis by HslU are essential for unfolding of protein substrates subsequently hydrolyzed by HslV. HslU recognizes the N-terminal part of its protein substrates and unfolds these before they are guided to HslV for hydrolysis. The polypeptide is ATP-dependent protease ATPase subunit HslU (Wigglesworthia glossinidia brevipalpis).